The sequence spans 146 residues: Aspartate carbamoyltransferase regulatory chain (146 aa).

Residues cysteine 102, cysteine 107, cysteine 131, and cysteine 134 each contribute to the Zn(2+) site.

It belongs to the PyrI family. In terms of assembly, contains catalytic and regulatory chains. Zn(2+) serves as cofactor.

Its function is as follows. Involved in allosteric regulation of aspartate carbamoyltransferase. The protein is Aspartate carbamoyltransferase regulatory chain of Clostridium acetobutylicum (strain ATCC 824 / DSM 792 / JCM 1419 / IAM 19013 / LMG 5710 / NBRC 13948 / NRRL B-527 / VKM B-1787 / 2291 / W).